We begin with the raw amino-acid sequence, 453 residues long: Phenylalanine-4-hydroxylase (453 aa).

Ala2 is modified (N-acetylalanine). Ser16 carries the post-translational modification Phosphoserine. The 79-residue stretch at 36-114 folds into the ACT domain; that stretch reads SLIFSLKEEV…TVHELSRDKE (79 aa). 3 residues coordinate Fe cation: His285, His290, and Glu330.

It belongs to the biopterin-dependent aromatic amino acid hydroxylase family. In terms of assembly, homodimer and homotetramer. Fe(2+) serves as cofactor. Post-translationally, phosphorylation at Ser-16 increases basal activity and facilitates activation by the substrate phenylalanine.

It catalyses the reaction (6R)-L-erythro-5,6,7,8-tetrahydrobiopterin + L-phenylalanine + O2 = (4aS,6R)-4a-hydroxy-L-erythro-5,6,7,8-tetrahydrobiopterin + L-tyrosine. It functions in the pathway amino-acid degradation; L-phenylalanine degradation; acetoacetate and fumarate from L-phenylalanine: step 1/6. With respect to regulation, N-terminal region of PAH is thought to contain allosteric binding sites for phenylalanine and to constitute an 'inhibitory' domain that regulates the activity of a catalytic domain in the C-terminal portion of the molecule. In terms of biological role, catalyzes the hydroxylation of L-phenylalanine to L-tyrosine. This Mus musculus (Mouse) protein is Phenylalanine-4-hydroxylase (Pah).